The chain runs to 799 residues: Heat shock protein 90-6, mitochondrial (799 aa).

A mitochondrion-targeting transit peptide spans 1 to 48 (MIRLSKRSVSTLLRSGNQSFRIAAAASTSRSSPSATDVKRSDTESRWY). Positions 23–35 (AAAASTSRSSPSA) are enriched in low complexity. The disordered stretch occupies residues 23–61 (AAAASTSRSSPSATDVKRSDTESRWYSSLTNGQSKNSGS). The segment covering 46–61 (RWYSSLTNGQSKNSGS) has biased composition (polar residues). Residues Glu124, Asn128, Asp170, Met175, 190–191 (SG), 214–219 (QFGVGF), and Thr269 each bind ATP. The tract at residues 314–337 (EVEVEDDPTETKKDDQDDQTEKKK) is disordered. A compositionally biased stretch (basic and acidic residues) spans 322–334 (TETKKDDQDDQTE). ATP is bound at residue Arg464. Polar residues predominate over residues 766–777 (SPEVQPQQQQMA). Residues 766–799 (SPEVQPQQQQMAHSHDAETFEAEVVEPVEVDGKK) are disordered. Over residues 784 to 799 (TFEAEVVEPVEVDGKK) the composition is skewed to acidic residues.

It belongs to the heat shock protein 90 family. In terms of assembly, interacts with P23-1.

The protein localises to the mitochondrion. In terms of biological role, molecular chaperone which stabilizes unfolding protein intermediates and functions as a folding molecular chaperone that assists the non-covalent folding of proteins in an ATP-dependent manner. The polypeptide is Heat shock protein 90-6, mitochondrial (Arabidopsis thaliana (Mouse-ear cress)).